The primary structure comprises 435 residues: Gamma-glutamyl phosphate reductase (435 aa).

It belongs to the gamma-glutamyl phosphate reductase family.

Its subcellular location is the cytoplasm. The catalysed reaction is L-glutamate 5-semialdehyde + phosphate + NADP(+) = L-glutamyl 5-phosphate + NADPH + H(+). Its pathway is amino-acid biosynthesis; L-proline biosynthesis; L-glutamate 5-semialdehyde from L-glutamate: step 2/2. Catalyzes the NADPH-dependent reduction of L-glutamate 5-phosphate into L-glutamate 5-semialdehyde and phosphate. The product spontaneously undergoes cyclization to form 1-pyrroline-5-carboxylate. The sequence is that of Gamma-glutamyl phosphate reductase from Parasynechococcus marenigrum (strain WH8102).